The sequence spans 125 residues: uncharacterized protein (125 aa).

This is an uncharacterized protein from Mycoplasma (Bacteriophage L2).